The primary structure comprises 304 residues: Serine protease 30 (304 aa).

An N-terminal signal peptide occupies residues 1–21 (MESWARCIFLLLLQILTGGRG). A propeptide spans 22-30 (DILHSGAGK) (activation peptide). One can recognise a Peptidase S1 domain in the interval 31-271 (IVGGQDAPEG…YVDWIQRTLA (241 aa)). A disulfide bridge connects residues Cys-57 and Cys-73. His-72 serves as the catalytic Charge relay system. Asn-79 carries an N-linked (GlcNAc...) asparagine glycan. The Charge relay system role is filled by Asp-122. 3 disulfide bridges follow: Cys-155-Cys-229, Cys-185-Cys-208, and Cys-219-Cys-247. Ser-223 (charge relay system) is an active-site residue. N-linked (GlcNAc...) asparagine glycans are attached at residues Asn-232 and Asn-273. A lipid anchor (GPI-anchor amidated serine) is attached at Ser-275. A propeptide spans 276–304 (DAYGCRSRASGAYPALLLVLLAFALPESL) (removed in mature form).

The protein belongs to the peptidase S1 family. As to expression, expressed predominantly in kidney, small intestine and stomach and moderately in thymus, lung, spleen, testis and skin. In the kidney, expressed mainly in collecting duct of renal medulla and cortex.

The protein resides in the cell membrane. Its activity is regulated as follows. Inhibited by aprotinin, leupeptin, benzamidine and soybean trypsin inhibitor. Partially inhibited by PMSF and DFP. Its function is as follows. Selectively cleaves synthetic peptide substrates of trypsin. Activates the epithelial sodium channel ENaC. The sequence is that of Serine protease 30 (Prss30) from Rattus norvegicus (Rat).